The sequence spans 375 residues: MESPKNSLIPSFLYSSSSSPRSFLLDQVLNSNSNAAFEKSPSPAPRSSPTSMISRKNFLIASPTEPGKGIEMYSPAFYAACTFGGILSCGLTHMTVTPLDLVKCNMQIDPAKYKSISSGFGILLKEQGVKGFFRGWVPTLLGYSAQGACKFGFYEYFKKTYSDLAGPEYTAKYKTLIYLAGSASAEIIADIALCPFEAVKVRVQTQPGFARGMSDGFPKFIKSEGYGGLYKGLAPLWGRQIPYTMMKFASFETIVEMIYKYAIPNPKSECSKGLQLGVSFAGGYVAGVFCAIVSHPADNLVSFLNNAKGATVGDAVKKIGMVGLFTRGLPLRIVMIGTLTGAQWGLYDAFKVFVGLPTTGGVAPAPAIAATEAKA.

A helical membrane pass occupies residues 76 to 96 (AFYAACTFGGILSCGLTHMTV). Solcar repeat units follow at residues 76-160 (AFYA…FKKT), 173-257 (YKTL…IVEM), and 274-353 (LQLG…FKVF). Residues 97 to 134 (TPLDLVKCNMQIDPAKYKSISSGFGILLKEQGVKGFFR) are Mitochondrial matrix-facing. The helical transmembrane segment at 135-154 (GWVPTLLGYSAQGACKFGFY) threads the bilayer. Topologically, residues 155 to 175 (EYFKKTYSDLAGPEYTAKYKT) are mitochondrial intermembrane. A helical membrane pass occupies residues 176 to 196 (LIYLAGSASAEIIADIALCPF). Over 197 to 231 (EAVKVRVQTQPGFARGMSDGFPKFIKSEGYGGLYK) the chain is Mitochondrial matrix. Residues 232-251 (GLAPLWGRQIPYTMMKFASF) traverse the membrane as a helical segment. The Mitochondrial intermembrane segment spans residues 252–272 (ETIVEMIYKYAIPNPKSECSK). The helical transmembrane segment at 273 to 293 (GLQLGVSFAGGYVAGVFCAIV) threads the bilayer. Over 294–332 (SHPADNLVSFLNNAKGATVGDAVKKIGMVGLFTRGLPLR) the chain is Mitochondrial matrix. Residues 333–353 (IVMIGTLTGAQWGLYDAFKVF) traverse the membrane as a helical segment. At 354-375 (VGLPTTGGVAPAPAIAATEAKA) the chain is on the mitochondrial intermembrane side.

The protein belongs to the mitochondrial carrier (TC 2.A.29) family. Expressed in stems, leaves and flowers. Strong expression in vascular tissues.

It localises to the mitochondrion inner membrane. Transport of phosphate groups from the cytosol to the mitochondrial matrix. Mediates salt stress tolerance through an ATP-dependent pathway and via modulation of the gibberellin metabolism. The chain is Mitochondrial phosphate carrier protein 3, mitochondrial (MPT3) from Arabidopsis thaliana (Mouse-ear cress).